We begin with the raw amino-acid sequence, 486 residues long: Cardiolipin synthase A (486 aa).

The next 2 membrane-spanning stretches (helical) occupy residues 3 to 23 (TFYT…IAGV) and 38 to 58 (MAWL…YLSF). 2 consecutive PLD phosphodiesterase domains span residues 219–246 (MDLR…VDPR) and 399–426 (EGGL…DMRS). Residues His-224, Lys-226, Asp-231, His-404, Lys-406, and Asp-411 contribute to the active site.

The protein belongs to the phospholipase D family. Cardiolipin synthase subfamily. ClsA sub-subfamily.

It is found in the cell inner membrane. It carries out the reaction 2 a 1,2-diacyl-sn-glycero-3-phospho-(1'-sn-glycerol) = a cardiolipin + glycerol. Functionally, catalyzes the reversible phosphatidyl group transfer from one phosphatidylglycerol molecule to another to form cardiolipin (CL) (diphosphatidylglycerol) and glycerol. This Escherichia fergusonii (strain ATCC 35469 / DSM 13698 / CCUG 18766 / IAM 14443 / JCM 21226 / LMG 7866 / NBRC 102419 / NCTC 12128 / CDC 0568-73) protein is Cardiolipin synthase A.